The chain runs to 439 residues: D-inositol 3-phosphate glycosyltransferase (439 aa).

His21 lines the 1D-myo-inositol 3-phosphate pocket. Residues 27–28 and Gly35 each bind UDP-N-acetyl-alpha-D-glucosamine; that span reads QP. 1D-myo-inositol 3-phosphate is bound by residues 32 to 37, Lys90, Tyr123, Thr147, and Arg167; that span reads DAGGMN. Positions 241, 246, and 299 each coordinate UDP-N-acetyl-alpha-D-glucosamine. Positions 308, 309, and 311 each coordinate Mg(2+). Residues Glu321 and Glu329 each contribute to the UDP-N-acetyl-alpha-D-glucosamine site. Residue Thr335 coordinates Mg(2+).

It belongs to the glycosyltransferase group 1 family. MshA subfamily. As to quaternary structure, homodimer.

The enzyme catalyses 1D-myo-inositol 3-phosphate + UDP-N-acetyl-alpha-D-glucosamine = 1D-myo-inositol 2-acetamido-2-deoxy-alpha-D-glucopyranoside 3-phosphate + UDP + H(+). Functionally, catalyzes the transfer of a N-acetyl-glucosamine moiety to 1D-myo-inositol 3-phosphate to produce 1D-myo-inositol 2-acetamido-2-deoxy-glucopyranoside 3-phosphate in the mycothiol biosynthesis pathway. The sequence is that of D-inositol 3-phosphate glycosyltransferase from Mycobacterium sp. (strain KMS).